The following is a 287-amino-acid chain: tRNA-cytidine(32) 2-sulfurtransferase (287 aa).

A PP-loop motif motif is present at residues 39–44 (SGGKDS). Residues Cys-114, Cys-117, and Cys-205 each contribute to the [4Fe-4S] cluster site.

It belongs to the TtcA family. As to quaternary structure, homodimer. Requires Mg(2+) as cofactor. The cofactor is [4Fe-4S] cluster.

The protein localises to the cytoplasm. The enzyme catalyses cytidine(32) in tRNA + S-sulfanyl-L-cysteinyl-[cysteine desulfurase] + AH2 + ATP = 2-thiocytidine(32) in tRNA + L-cysteinyl-[cysteine desulfurase] + A + AMP + diphosphate + H(+). The protein operates within tRNA modification. Its function is as follows. Catalyzes the ATP-dependent 2-thiolation of cytidine in position 32 of tRNA, to form 2-thiocytidine (s(2)C32). The sulfur atoms are provided by the cysteine/cysteine desulfurase (IscS) system. The polypeptide is tRNA-cytidine(32) 2-sulfurtransferase (Dechloromonas aromatica (strain RCB)).